The primary structure comprises 119 residues: DNA-binding protein TubR (119 aa).

Homodimer. Binds to TubZ filaments via the C-terminus of TubZ. DNA is not required for binding to TubZ.

In terms of biological role, a DNA-binding protein that is part of the type III plasmid partition system used to ensure correct segregation of the pBc10987 plasmid. Binds TubZ filaments but does not influence the GTPase activity of TubZ with or without DNA. Cooperatively binds to multiple regions in tubC (centromere-like site) upstream of its own gene with consensus sequence N(T/A)ATTNC(C/G)GNAAT(A/T)N; probably forms an extended DNA-protein filament. Binds sites in its own promoter region and presumably represses its expression; its effect on RNA expression has not been shown. Does not specifically bind to the putative origin of replication on pBc10987. The polypeptide is DNA-binding protein TubR (Bacillus cereus (strain ATCC 10987 / NRS 248)).